The chain runs to 373 residues: Chaperone protein DnaJ (373 aa).

One can recognise a J domain in the interval Asp5–Gly70. The CR-type zinc finger occupies Gly132–Thr214. Cys145, Cys148, Cys162, Cys165, Cys188, Cys191, Cys202, and Cys205 together coordinate Zn(2+). CXXCXGXG motif repeat units lie at residues Cys145–Gly152, Cys162–Gly169, Cys188–Gly195, and Cys202–Gly209.

Belongs to the DnaJ family. Homodimer. Zn(2+) is required as a cofactor.

The protein localises to the cytoplasm. Its function is as follows. Participates actively in the response to hyperosmotic and heat shock by preventing the aggregation of stress-denatured proteins and by disaggregating proteins, also in an autonomous, DnaK-independent fashion. Unfolded proteins bind initially to DnaJ; upon interaction with the DnaJ-bound protein, DnaK hydrolyzes its bound ATP, resulting in the formation of a stable complex. GrpE releases ADP from DnaK; ATP binding to DnaK triggers the release of the substrate protein, thus completing the reaction cycle. Several rounds of ATP-dependent interactions between DnaJ, DnaK and GrpE are required for fully efficient folding. Also involved, together with DnaK and GrpE, in the DNA replication of plasmids through activation of initiation proteins. This chain is Chaperone protein DnaJ, found in Clostridium botulinum (strain Alaska E43 / Type E3).